A 358-amino-acid chain; its full sequence is Short chain dehydrogenase sor7 (358 aa).

A disordered region spans residues 1–22 (MSSPAIGQPPIPPTPTDANISG). Residues leucine 34, aspartate 88, asparagine 115, tyrosine 206, lysine 210, valine 238, and threonine 240 each coordinate NADP(+). The active-site Proton donor is tyrosine 206. Lysine 210 (lowers pKa of active site Tyr) is an active-site residue.

It belongs to the short-chain dehydrogenases/reductases (SDR) family.

Its pathway is secondary metabolite biosynthesis. Functionally, short chain dehydrogenase; part of the SOR gene cluster that mediates the biosynthesis of sorbicillinoids, a diverse group of yellow secondary metabolites that restrict growth of competing pathogenic fungi but not of bacteria. Sorbicillinoids biosynthesis requires the action of two PKSs. The SOR cluster is required for the production of trichodimerol and dihydrotrichotetronin, with sor2 being sufficient for production of trichodimerol, but not dihydrotrichotetronin in the light. Sor1 iteratively combines three acetyl units and the growing chain is modified by the ketoacyl reductase subunit, and optional by the enoyl reductase subunit in the second cycle. The polyketide is then handed over to the PKS sor2, which adds three more acetyl units, and two methyl groups. Sor2 releases an aldehyde, which undergoes spontaneous cyclization resulting in the formation of sorbicillin or 2',3'-dihydrosorbicillin. The monooxygenase sor5 oxidizes sorbicillin and 2',3'-dihydrosorbicillin to 2',3'-dihydrosorbicillinol and sorbicillinol, respectively. The oxidoreductase sor8 further converts sorbicillinol into oxosorbicillinol. Sorbicillinol is the building block for the other sorbicillinoids such as disorbicillinol, bisvertinolon, dihydrobisvertinolone, and dihydrotrichotetronine. This chain is Short chain dehydrogenase sor7, found in Hypocrea jecorina (strain QM6a) (Trichoderma reesei).